Reading from the N-terminus, the 251-residue chain is 1-(5-phosphoribosyl)-5-[(5-phosphoribosylamino)methylideneamino] imidazole-4-carboxamide isomerase (251 aa).

The active-site Proton acceptor is aspartate 8. Aspartate 131 functions as the Proton donor in the catalytic mechanism.

The protein belongs to the HisA/HisF family.

The protein localises to the cytoplasm. It catalyses the reaction 1-(5-phospho-beta-D-ribosyl)-5-[(5-phospho-beta-D-ribosylamino)methylideneamino]imidazole-4-carboxamide = 5-[(5-phospho-1-deoxy-D-ribulos-1-ylimino)methylamino]-1-(5-phospho-beta-D-ribosyl)imidazole-4-carboxamide. It functions in the pathway amino-acid biosynthesis; L-histidine biosynthesis; L-histidine from 5-phospho-alpha-D-ribose 1-diphosphate: step 4/9. This chain is 1-(5-phosphoribosyl)-5-[(5-phosphoribosylamino)methylideneamino] imidazole-4-carboxamide isomerase, found in Burkholderia vietnamiensis (strain G4 / LMG 22486) (Burkholderia cepacia (strain R1808)).